The following is a 262-amino-acid chain: 2-keto-4-pentenoate hydratase (262 aa).

Belongs to the hydratase/decarboxylase family. MhpD subfamily. It depends on a divalent metal cation as a cofactor.

The catalysed reaction is (S)-4-hydroxy-2-oxopentanoate = (2Z)-2-hydroxypenta-2,4-dienoate + H2O. It participates in aromatic compound metabolism; 3-phenylpropanoate degradation. In terms of biological role, catalyzes the conversion of 2-hydroxypentadienoic acid (enolic form of 2-oxopent-4-enoate) to 4-hydroxy-2-ketopentanoic acid. This chain is 2-keto-4-pentenoate hydratase, found in Burkholderia vietnamiensis (strain G4 / LMG 22486) (Burkholderia cepacia (strain R1808)).